A 160-amino-acid polypeptide reads, in one-letter code: Transcription elongation factor GreA (160 aa).

Residues 50 to 70 adopt a coiled-coil conformation; the sequence is AAREQQSFNEGRIQELEAKLS.

The protein belongs to the GreA/GreB family.

Its function is as follows. Necessary for efficient RNA polymerase transcription elongation past template-encoded arresting sites. The arresting sites in DNA have the property of trapping a certain fraction of elongating RNA polymerases that pass through, resulting in locked ternary complexes. Cleavage of the nascent transcript by cleavage factors such as GreA or GreB allows the resumption of elongation from the new 3'terminus. GreA releases sequences of 2 to 3 nucleotides. The protein is Transcription elongation factor GreA of Legionella pneumophila (strain Corby).